Consider the following 324-residue polypeptide: Proto-oncogene Mas (324 aa).

Residues 1–35 (MDQSNMTSLAEEKAMNTSSRNASLGSSHPPIPIVH) lie on the Extracellular side of the membrane. N-linked (GlcNAc...) asparagine glycosylation is found at asparagine 5, asparagine 16, and asparagine 21. Residues 36–60 (WVIMSISPLGFVENGILLWFLCFRM) traverse the membrane as a helical segment. Topologically, residues 61–64 (RRNP) are cytoplasmic. A helical membrane pass occupies residues 65–86 (FTVYITHLSIADISLLFCIFIL). At 87-103 (SIDYALDYELSSGHHYT) the chain is on the extracellular side. Residues 104 to 127 (IVTLSVTFLFGYNTGLYLLTAISV) traverse the membrane as a helical segment. The Cytoplasmic portion of the chain corresponds to 128–148 (ERCLSVLYPIWYRCHRPKHQS). Residues 149 to 171 (AFVCALLWALSCLVTTMEYVMCI) form a helical membrane-spanning segment. The Extracellular portion of the chain corresponds to 172–184 (DSGEESHSRSDCR). The helical transmembrane segment at 185–205 (AVIIFIAILSFLVFTPLMLVS) threads the bilayer. Topologically, residues 206 to 223 (STILVVKIRKNTWASHSS) are cytoplasmic. Residues 224 to 244 (KLYIVIMVTIIIFLIFAMPMR) form a helical membrane-spanning segment. Residues 245–262 (VLYLLYYEYWSAFGNLHN) are Extracellular-facing. The helical transmembrane segment at 263–283 (ISLLFSTINSSANPFIYFFVG) threads the bilayer. Residues 284 to 324 (SSKKKRFRESLKVVLTRAFKDEMQPRRQEGNGNTVSIETVV) are Cytoplasmic-facing.

It belongs to the G-protein coupled receptor 1 family. As to quaternary structure, interacts with AGTR1. Interacts with FLNA (via filamin repeat 21); increases PKA-mediated phosphorylation of FLNA.

The protein localises to the cell membrane. Functionally, acts specifically as a functional antagonist of AGTR1 (angiotensin-2 type 1 receptor), although it up-regulates AGTR1 receptor levels. Positive regulation of AGTR1 levels occurs through activation of the G-proteins GNA11 and GNAQ, and stimulation of the protein kinase C signaling cascade. The antagonist effect on AGTR1 function is probably due to AGTR1 being physically altered by MAS1. Receptor for angiotensin 1-7. The chain is Proto-oncogene Mas (Mas1) from Mus musculus (Mouse).